Here is a 373-residue protein sequence, read N- to C-terminus: Probable cysteine protease RD19C (373 aa).

Residues 1-20 (MDRVVFFFLIAATLLAGSLG) form the signal peptide. Residues 21–139 (STVISGEVTD…QTAPILPTSD (119 aa)) constitute a propeptide, activation peptide. 2 cysteine pairs are disulfide-bonded: Cys161–Cys211 and Cys195–Cys245. Cys164 is an active-site residue. The N-linked (GlcNAc...) asparagine glycan is linked to Asn258. Cysteines 301 and 356 form a disulfide. Catalysis depends on residues His307 and Asn334.

Belongs to the peptidase C1 family.

It is found in the lytic vacuole. Probable thiol protease. The polypeptide is Probable cysteine protease RD19C (Arabidopsis thaliana (Mouse-ear cress)).